A 346-amino-acid polypeptide reads, in one-letter code: UDP-3-O-acylglucosamine N-acyltransferase (346 aa).

The active-site Proton acceptor is the His240.

Belongs to the transferase hexapeptide repeat family. LpxD subfamily. As to quaternary structure, homotrimer.

It carries out the reaction a UDP-3-O-[(3R)-3-hydroxyacyl]-alpha-D-glucosamine + a (3R)-hydroxyacyl-[ACP] = a UDP-2-N,3-O-bis[(3R)-3-hydroxyacyl]-alpha-D-glucosamine + holo-[ACP] + H(+). It functions in the pathway bacterial outer membrane biogenesis; LPS lipid A biosynthesis. In terms of biological role, catalyzes the N-acylation of UDP-3-O-acylglucosamine using 3-hydroxyacyl-ACP as the acyl donor. Is involved in the biosynthesis of lipid A, a phosphorylated glycolipid that anchors the lipopolysaccharide to the outer membrane of the cell. This chain is UDP-3-O-acylglucosamine N-acyltransferase, found in Phocaeicola vulgatus (strain ATCC 8482 / DSM 1447 / JCM 5826 / CCUG 4940 / NBRC 14291 / NCTC 11154) (Bacteroides vulgatus).